A 497-amino-acid polypeptide reads, in one-letter code: Probable cytosol aminopeptidase (497 aa).

Mn(2+)-binding residues include lysine 267 and aspartate 272. The active site involves lysine 279. Mn(2+) is bound by residues aspartate 290, aspartate 349, and glutamate 351. Arginine 353 is an active-site residue.

It belongs to the peptidase M17 family. Mn(2+) serves as cofactor.

Its subcellular location is the cytoplasm. The catalysed reaction is Release of an N-terminal amino acid, Xaa-|-Yaa-, in which Xaa is preferably Leu, but may be other amino acids including Pro although not Arg or Lys, and Yaa may be Pro. Amino acid amides and methyl esters are also readily hydrolyzed, but rates on arylamides are exceedingly low.. It carries out the reaction Release of an N-terminal amino acid, preferentially leucine, but not glutamic or aspartic acids.. Presumably involved in the processing and regular turnover of intracellular proteins. Catalyzes the removal of unsubstituted N-terminal amino acids from various peptides. This chain is Probable cytosol aminopeptidase, found in Pseudomonas entomophila (strain L48).